Reading from the N-terminus, the 454-residue chain is Glutamyl-tRNA(Gln) amidotransferase subunit A (454 aa).

Residues Lys-56 and Ser-131 each act as charge relay system in the active site. The Acyl-ester intermediate role is filled by Ser-155.

Belongs to the amidase family. GatA subfamily. As to quaternary structure, heterotrimer of A, B and C subunits.

The catalysed reaction is L-glutamyl-tRNA(Gln) + L-glutamine + ATP + H2O = L-glutaminyl-tRNA(Gln) + L-glutamate + ADP + phosphate + H(+). Its function is as follows. Allows the formation of correctly charged Gln-tRNA(Gln) through the transamidation of misacylated Glu-tRNA(Gln) in organisms which lack glutaminyl-tRNA synthetase. The reaction takes place in the presence of glutamine and ATP through an activated gamma-phospho-Glu-tRNA(Gln). This Campylobacter lari (strain RM2100 / D67 / ATCC BAA-1060) protein is Glutamyl-tRNA(Gln) amidotransferase subunit A.